Reading from the N-terminus, the 172-residue chain is C-phycocyanin subunit beta (172 aa).

The residue at position 72 (N72) is an N4-methylasparagine. 2 residues coordinate (2R,3E)-phycocyanobilin: C82 and C153.

The protein belongs to the phycobiliprotein family. In terms of assembly, heterodimer of an alpha and a beta subunit, which further assembles into trimers and the trimers into hexamers. Post-translationally, contains two covalently linked bilin chromophores. The chromophore on position 82 is added by the phycocyanobilin lyase CpcUS, while the chromophore on position 153 is added by the phycocyanobilin lyase CpcT.

The protein resides in the cellular thylakoid membrane. Functionally, light-harvesting photosynthetic bile pigment-protein from the phycobiliprotein complex (phycobilisome, PBS). Phycocyanin is the major phycobiliprotein in the PBS rod. The protein is C-phycocyanin subunit beta (cpcB) of Picosynechococcus sp. (strain ATCC 27264 / PCC 7002 / PR-6) (Agmenellum quadruplicatum).